Reading from the N-terminus, the 246-residue chain is Granzyme H (246 aa).

The signal sequence occupies residues 1-18; that stretch reads MQPFLLLLAFLLTPGAGT. The propeptide at 19–20 is activation peptide; it reads EE. The 224-residue stretch at 21-244 folds into the Peptidase S1 domain; the sequence is IIGGHEAKPH…FLPWIKRTMK (224 aa). Residues 46 to 48 form a mediates the preference for acidic residues at the P3' and P4' sites region; sequence RKR. C49 and C65 are joined by a disulfide. Catalysis depends on H64, which acts as the Charge relay system. N71 and N104 each carry an N-linked (GlcNAc...) asparagine glycan. D108 (charge relay system) is an active-site residue. Intrachain disulfides connect C142–C208 and C172–C187. An N-linked (GlcNAc...) asparagine glycan is attached at N179. Residue S202 is the Charge relay system of the active site.

This sequence belongs to the peptidase S1 family. Granzyme subfamily. Constitutively expressed in NK cells.

The protein localises to the cytolytic granule. Inhibited by SERPINB1. Cytotoxic chymotrypsin-like serine protease with preference for bulky and aromatic residues at the P1 position and acidic residues at the P3' and P4' sites. Probably necessary for target cell lysis in cell-mediated immune responses. Participates in the antiviral response via direct cleavage of several proteins essential for viral replication. The sequence is that of Granzyme H (GZMH) from Homo sapiens (Human).